The following is a 118-amino-acid chain: uncharacterized protein (118 aa).

Belongs to the transposase IS3/IS150/IS904 family.

This is an uncharacterized protein from Haemophilus influenzae (strain ATCC 51907 / DSM 11121 / KW20 / Rd).